The primary structure comprises 123 residues: Holo-[acyl-carrier-protein] synthase (123 aa).

Mg(2+) is bound by residues Asp-8 and Glu-60.

The protein belongs to the P-Pant transferase superfamily. AcpS family. Mg(2+) is required as a cofactor.

The protein localises to the cytoplasm. The catalysed reaction is apo-[ACP] + CoA = holo-[ACP] + adenosine 3',5'-bisphosphate + H(+). Transfers the 4'-phosphopantetheine moiety from coenzyme A to a Ser of acyl-carrier-protein. In Ehrlichia ruminantium (strain Gardel), this protein is Holo-[acyl-carrier-protein] synthase.